Reading from the N-terminus, the 999-residue chain is MEEAHLLSAADVLRRFSVTAEGGLSLEQVTDARERYGPNELPTEEGKSLWELVVEQFEDLLVRILLLAALVSFVLAWFEEGEETTTAFVEPLVIMLILVANAIVGVWQERNAESAIEALKEYEPEMGKVIRSDRKGVQRIRARDIVPGDIVEVAVGDKVPADLRLIEIKSTTLRVDQSILTGESVSVTKHTDAIPDPRAVNQDKKNMLFSGTNIASGKALGVAVATGLQTELGKIRSQMAAVEPERTPLQRKLDEFGRQLSHAISVICVAVWVINIGHFADPAHGGSWLRGAVYYFKIAVALAVAAIPEGLPAVITTCLALGTRRMARKNAIVRSLPSVETLGCTSVICSDKTGTLTTNQMSVCRMFVVAEAEAGTCRLHEFTISGTTYTPEGEVRQGEQPVRCGQFDGLVELATICALCNDSALDYNEAKGVYEKVGEATETALTCLVEKMNVFDTDLKGLSRVERAGACNSVIKQLMRKEFTLEFSRDRKSMSVYCTPTRADPKVQGSKMFVKGAPESVIERCSSVRVGSRTAPLSTTSREHILAKIRDWGSGSDTLRCLALATRDTPPRKEDMHLDDCSRFVQYETDLTFVGCVGMLDPPRPEVAACITRCSRAGIRVVMITGDNKGTAVAICRRLGIFGDTEDVLGKAYTGREFDDLSPEQQRQACRTARCFARVEPAHKSRIVENLQSFNEITAMTGDGVNDAPALKKAEIGIAMGSGTAVAKSAAEMVLSDDNFASIVAAVEEGRAIYNNMKQFIRYLISSNVGEVVCIFLTAILGLPEALIPVQLLWVNLVTDGLPATALGFNPPDLDIMEKPPRNPREALISGWLFFRYLAIGVYVGLATVAAATWWFLYDTEGPQVTFYQLRNFLKCSEDNPLFAGIDCKVFESRFPTTMALSVLVTIEMCNALNSVSENQSLLRMPPWLNPWLLGAVVMSMALHFLILLVPPLPLIFQVTPLSGRQWGVVLQMSLPVILLDEALKYLSRNHMDEKKDLK.

Position 1 is an N-acetylmethionine (Met-1). Residues 1-48 (MEEAHLLSAADVLRRFSVTAEGGLSLEQVTDARERYGPNELPTEEGKS) are Cytoplasmic-facing. Ser-17 carries the post-translational modification Phosphoserine. Thr-19 is modified (phosphothreonine). Ser-25 bears the Phosphoserine mark. Residues 49 to 69 (LWELVVEQFEDLLVRILLLAA) traverse the membrane as a helical segment. Topologically, residues 70–89 (LVSFVLAWFEEGEETTTAFV) are lumenal. A helical transmembrane segment spans residues 90–110 (EPLVIMLILVANAIVGVWQER). The Cytoplasmic portion of the chain corresponds to 111–253 (NAESAIEALK…PERTPLQRKL (143 aa)). The chain crosses the membrane as a helical span at residues 254–273 (DEFGRQLSHAISVICVAVWV). Residues 274 to 295 (INIGHFADPAHGGSWLRGAVYY) lie on the Lumenal side of the membrane. The chain crosses the membrane as a helical span at residues 296 to 313 (FKIAVALAVAAIPEGLPA). The Ca(2+) site is built by Val-304, Ala-305, Ile-307, and Glu-309. At 314–757 (VITTCLALGT…EEGRAIYNNM (444 aa)) the chain is on the cytoplasmic side. Asp-351 acts as the 4-aspartylphosphate intermediate in catalysis. Mg(2+) is bound by residues Asp-351 and Thr-353. An ATP-binding site is contributed by Thr-353. The segment at 370–400 (AEAEAGTCRLHEFTISGTTYTPEGEVRQGEQ) is interaction with phospholamban 1. Residue Thr-415 is modified to Phosphothreonine. The ATP site is built by Glu-442, Arg-489, Lys-515, Arg-560, Thr-625, Gly-626, and Asp-627. Phosphoserine is present on Ser-662. ATP is bound by residues Arg-678 and Lys-684. Asp-703 contacts Mg(2+). Residue Asn-706 participates in ATP binding. A helical transmembrane segment spans residues 758–777 (KQFIRYLISSNVGEVVCIFL). Asn-768 and Glu-771 together coordinate Ca(2+). The Lumenal portion of the chain corresponds to 778 to 787 (TAILGLPEAL). Residues 788 to 808 (IPVQLLWVNLVTDGLPATALG) form a helical membrane-spanning segment. Residues 788 to 808 (IPVQLLWVNLVTDGLPATALG) form an interaction with phospholamban 2 region. Ca(2+) contacts are provided by Asn-796, Thr-799, and Asp-800. The Cytoplasmic segment spans residues 809 to 828 (FNPPDLDIMEKPPRNPREAL). A helical transmembrane segment spans residues 829–851 (ISGWLFFRYLAIGVYVGLATVAA). Residues 852–897 (ATWWFLYDTEGPQVTFYQLRNFLKCSEDNPLFAGIDCKVFESRFPT) lie on the Lumenal side of the membrane. Residues 898–917 (TMALSVLVTIEMCNALNSVS) form a helical membrane-spanning segment. Glu-908 contacts Ca(2+). At 918-930 (ENQSLLRMPPWLN) the chain is on the cytoplasmic side. The helical transmembrane segment at 931-949 (PWLLGAVVMSMALHFLILL) threads the bilayer. Topologically, residues 950–964 (VPPLPLIFQVTPLSG) are lumenal. Residues 965-985 (RQWGVVLQMSLPVILLDEALK) form a helical membrane-spanning segment. At 986–999 (YLSRNHMDEKKDLK) the chain is on the cytoplasmic side.

The protein belongs to the cation transport ATPase (P-type) (TC 3.A.3) family. Type IIA subfamily. Interacts with sarcolipin (SLN). Interacts with phospholamban (PLN). Interacts with myoregulin (MRLN). Interacts with DWORF. Interacts with VMP1. Interacts with TUNAR; the interaction occurs at low levels in low glucose conditions and is increased by high glucose levels. The cofactor is Mg(2+).

It localises to the endoplasmic reticulum membrane. The protein localises to the sarcoplasmic reticulum membrane. It carries out the reaction Ca(2+)(in) + ATP + H2O = Ca(2+)(out) + ADP + phosphate + H(+). Inhibited by sarcolipin (SLN), phospholamban (PLN) and myoregulin (MRLN). Enhanced by DWORF; DWORF increases activity by displacing sarcolipin (SLN), phospholamban (PLN) and myoregulin (MRLN). This magnesium-dependent enzyme catalyzes the hydrolysis of ATP coupled with the transport of calcium. Transports calcium ions from the cytosol into the sarcoplasmic/endoplasmic reticulum lumen. Contributes to calcium sequestration involved in muscular excitation/contraction. The sequence is that of Sarcoplasmic/endoplasmic reticulum calcium ATPase 3 (Atp2a3) from Mus musculus (Mouse).